The chain runs to 139 residues: Putative nickel-responsive regulator (139 aa).

Positions 79, 90, 92, and 98 each coordinate Ni(2+).

Belongs to the transcriptional regulatory CopG/NikR family. It depends on Ni(2+) as a cofactor.

In terms of biological role, transcriptional regulator. The protein is Putative nickel-responsive regulator of Pelobacter propionicus (strain DSM 2379 / NBRC 103807 / OttBd1).